The sequence spans 208 residues: Probable GTP-binding protein EngB (208 aa).

Residues 23–205 (LTSEMVILGR…RQTLLKYLLT (183 aa)) enclose the EngB-type G domain. Residues 31–38 (GRSNVGKS), 57–61 (GKTRL), 84–87 (DLPG), 154–157 (TKFD), and 182–184 (FNA) contribute to the GTP site. Mg(2+) is bound by residues Ser-38 and Thr-59.

This sequence belongs to the TRAFAC class TrmE-Era-EngA-EngB-Septin-like GTPase superfamily. EngB GTPase family. Mg(2+) is required as a cofactor.

In terms of biological role, necessary for normal cell division and for the maintenance of normal septation. The polypeptide is Probable GTP-binding protein EngB (Helicobacter pylori (strain P12)).